The sequence spans 387 residues: Alpha-maltose-1-phosphate synthase (387 aa).

Belongs to the glycosyltransferase group 1 family.

It carries out the reaction ADP-alpha-D-glucose + alpha-D-glucose 1-phosphate = alpha-maltose 1-phosphate + ADP + H(+). Its pathway is capsule biogenesis; capsule polysaccharide biosynthesis. It participates in glycan biosynthesis; glycogen biosynthesis. Functionally, involved in the biosynthesis of the maltose-1-phosphate (M1P) building block required for alpha-glucan production by the key enzyme GlgE. Catalyzes the formation of an alpha-1,4 linkage between glucose from ADP-glucose and glucose 1-phosphate (G1P) to yield maltose-1-phosphate (M1P). This Mycobacterium tuberculosis (strain CDC 1551 / Oshkosh) protein is Alpha-maltose-1-phosphate synthase.